A 460-amino-acid polypeptide reads, in one-letter code: NADH-ubiquinone oxidoreductase chain 4 (460 aa).

13 consecutive transmembrane segments (helical) span residues 20-42 (SKWLWTTTTMNSFLIAFISLTWL), 61-81 (PLSTPLLVLTCWLLPLMILAS), 94-113 (RMYITLLASLQTFMIMAFGA), 114-134 (TKIIMFYIMFEATLIPTLIII), 148-168 (TYFLFYTLAGSLPLLVALLLL), 195-215 (IWWAGCLIAFLVKMPLYGMHL), 225-245 (PVAGSMILAAVLLKLGGYGMM), 258-278 (LAYPFIILALWGVIMTGLVCL), 285-304 (SLIAYSSVGHMGLVAGGILI), 308-330 (WGFTGAIILMIAHGLTSSALFCL), 351-371 (MVLPLATVWWFIANLANLALP), 380-400 (LMIITALFNWSPWTIIITGMG), and 436-456 (LLMTLHLIPIILLMLKPELMW).

This sequence belongs to the complex I subunit 4 family. As to quaternary structure, core subunit of respiratory chain NADH dehydrogenase (Complex I) which is composed of 45 different subunits.

Its subcellular location is the mitochondrion inner membrane. It carries out the reaction a ubiquinone + NADH + 5 H(+)(in) = a ubiquinol + NAD(+) + 4 H(+)(out). In terms of biological role, core subunit of the mitochondrial membrane respiratory chain NADH dehydrogenase (Complex I) which catalyzes electron transfer from NADH through the respiratory chain, using ubiquinone as an electron acceptor. Essential for the catalytic activity and assembly of complex I. This chain is NADH-ubiquinone oxidoreductase chain 4 (mt-nd4), found in Danio rerio (Zebrafish).